Reading from the N-terminus, the 826-residue chain is Ribonucleases P/MRP protein subunit POP1 (826 aa).

Disordered stretches follow at residues 1 to 24 (MATT…PRKI) and 49 to 91 (NKDF…SGGD). Residues 58 to 65 (KRRRTNSY) carry the Nuclear localization signal motif. Residues 70–79 (AKKRNIKRQK) are compositionally biased toward basic residues.

Component of nuclear RNase P and RNase MRP ribonucleoproteins. RNase P consists of a catalytic RNA moiety and different protein chains. Several subunits of RNase P are also part of the RNase MRP complex. RNase MRP consists of a catalytic RNA moiety and several protein subunits.

The protein localises to the nucleus. It is found in the nucleolus. Component of ribonuclease P, a ribonucleoprotein complex that generates mature tRNA molecules by cleaving their 5'-ends. Also a component of the MRP ribonuclease complex, which cleaves pre-rRNA sequences. Required for rRNA maturation, including 5.8S rRNA processing. The protein is Ribonucleases P/MRP protein subunit POP1 of Arabidopsis thaliana (Mouse-ear cress).